A 162-amino-acid polypeptide reads, in one-letter code: NADH-quinone oxidoreductase subunit I (162 aa).

2 consecutive 4Fe-4S ferredoxin-type domains span residues 54-83 (RRYENGEERCIACKLCEVVCPALAITINST) and 93-122 (SSYEMDLFKCIFCGYCEESCPVDSIVETNI). Residues C63, C66, C69, C73, C102, C105, C108, and C112 each coordinate [4Fe-4S] cluster.

The protein belongs to the complex I 23 kDa subunit family. In terms of assembly, NDH-1 is composed of 14 different subunits. Subunits NuoA, H, J, K, L, M, N constitute the membrane sector of the complex. [4Fe-4S] cluster is required as a cofactor.

Its subcellular location is the cell inner membrane. The enzyme catalyses a quinone + NADH + 5 H(+)(in) = a quinol + NAD(+) + 4 H(+)(out). NDH-1 shuttles electrons from NADH, via FMN and iron-sulfur (Fe-S) centers, to quinones in the respiratory chain. The immediate electron acceptor for the enzyme in this species is believed to be ubiquinone. Couples the redox reaction to proton translocation (for every two electrons transferred, four hydrogen ions are translocated across the cytoplasmic membrane), and thus conserves the redox energy in a proton gradient. In Francisella tularensis subsp. tularensis (strain FSC 198), this protein is NADH-quinone oxidoreductase subunit I.